The following is a 309-amino-acid chain: L-aminoadipate-semialdehyde dehydrogenase-phosphopantetheinyl transferase (309 aa).

Residues Arg47, 86 to 91 (RTAKGK), and 108 to 111 (NISH) contribute to the CoA site. Positions 129 and 181 each coordinate Mg(2+). Position 181-185 (181-185 (ESFIK)) interacts with CoA. At Ser258 the chain carries Phosphoserine.

It belongs to the P-Pant transferase superfamily. AcpS family. As to quaternary structure, monomer. The cofactor is Mg(2+).

The protein localises to the cytoplasm. Its subcellular location is the cytosol. The enzyme catalyses apo-[ACP] + CoA = holo-[ACP] + adenosine 3',5'-bisphosphate + H(+). It catalyses the reaction apo-[ACP] + acetyl-CoA = acetyl-[ACP] + adenosine 3',5'-bisphosphate + H(+). In terms of biological role, catalyzes the post-translational modification of target proteins by phosphopantetheine. Can transfer the 4'-phosphopantetheine moiety from coenzyme A, regardless of whether the CoA is presented in the free thiol form or as an acetyl thioester, to a serine residue of a broad range of acceptors including the acyl carrier domain of FASN. In Pongo abelii (Sumatran orangutan), this protein is L-aminoadipate-semialdehyde dehydrogenase-phosphopantetheinyl transferase (AASDHPPT).